The sequence spans 211 residues: Urease accessory protein UreE (211 aa).

The disordered stretch occupies residues 134–211 (FDPEGGAYAP…DHHGHGHEHK (78 aa)). The span at 147 to 202 (PSHDHAGHDHAHDSHAHHDHDHGKHAQHDHGKHDHAHHDHAAHDDHHVHDEHCGHD) shows a compositional bias: basic and acidic residues.

Belongs to the UreE family.

It localises to the cytoplasm. Involved in urease metallocenter assembly. Binds nickel. Probably functions as a nickel donor during metallocenter assembly. The chain is Urease accessory protein UreE from Rhodopseudomonas palustris (strain BisB18).